The sequence spans 91 residues: Apolipoprotein C-III (91 aa).

The N-terminal stretch at 1 to 20 is a signal peptide; sequence MQPRVLLAVTLLALLVSARA. Methionine 63 bears the Methionine sulfoxide mark. The tract at residues 68 to 91 is lipid-binding; sequence DSMKGYWTSLIGRLSGFLDSTPSS.

The protein belongs to the apolipoprotein C3 family.

It localises to the secreted. Its function is as follows. Component of triglyceride-rich very low density lipoproteins (VLDL) and high density lipoproteins (HDL) in plasma. Plays a multifaceted role in triglyceride homeostasis. Intracellularly, promotes hepatic very low density lipoprotein 1 (VLDL1) assembly and secretion; extracellularly, attenuates hydrolysis and clearance of triglyceride-rich lipoproteins (TRLs). Impairs the lipolysis of TRLs by inhibiting lipoprotein lipase and the hepatic uptake of TRLs by remnant receptors. Formed of several curved helices connected via semiflexible hinges, so that it can wrap tightly around the curved micelle surface and easily adapt to the different diameters of its natural binding partners. The chain is Apolipoprotein C-III (APOC3) from Cavia porcellus (Guinea pig).